A 419-amino-acid polypeptide reads, in one-letter code: Gamma-glutamyl phosphate reductase (419 aa).

Belongs to the gamma-glutamyl phosphate reductase family.

The protein localises to the cytoplasm. The enzyme catalyses L-glutamate 5-semialdehyde + phosphate + NADP(+) = L-glutamyl 5-phosphate + NADPH + H(+). The protein operates within amino-acid biosynthesis; L-proline biosynthesis; L-glutamate 5-semialdehyde from L-glutamate: step 2/2. Catalyzes the NADPH-dependent reduction of L-glutamate 5-phosphate into L-glutamate 5-semialdehyde and phosphate. The product spontaneously undergoes cyclization to form 1-pyrroline-5-carboxylate. In Yersinia pestis, this protein is Gamma-glutamyl phosphate reductase.